Here is a 339-residue protein sequence, read N- to C-terminus: N-acetyl-gamma-glutamyl-phosphate reductase (339 aa).

Residue Cys145 is part of the active site.

The protein belongs to the NAGSA dehydrogenase family. Type 1 subfamily.

Its subcellular location is the cytoplasm. The catalysed reaction is N-acetyl-L-glutamate 5-semialdehyde + phosphate + NADP(+) = N-acetyl-L-glutamyl 5-phosphate + NADPH + H(+). It functions in the pathway amino-acid biosynthesis; L-arginine biosynthesis; N(2)-acetyl-L-ornithine from L-glutamate: step 3/4. In terms of biological role, catalyzes the NADPH-dependent reduction of N-acetyl-5-glutamyl phosphate to yield N-acetyl-L-glutamate 5-semialdehyde. This Thermotoga maritima (strain ATCC 43589 / DSM 3109 / JCM 10099 / NBRC 100826 / MSB8) protein is N-acetyl-gamma-glutamyl-phosphate reductase.